The sequence spans 273 residues: Peptidyl-prolyl cis-trans isomerase E (273 aa).

The region spanning 1-48 is the RRM domain; that stretch reads MPMDYQTEKHRGFAFVEFEEVEDAMSAIDNMNESEIFGRTIRVNVARP. Positions 77–103 are disordered; that stretch reads RKLDEPDIVNPSDTSENVEDLSDEEMR. Residues 115–271 enclose the PPIase cyclophilin-type domain; sequence FFDIRIGNGD…EPVIISRCGE (157 aa).

It belongs to the cyclophilin-type PPIase family. PPIase E subfamily.

Its subcellular location is the cytoplasm. It carries out the reaction [protein]-peptidylproline (omega=180) = [protein]-peptidylproline (omega=0). Its activity is regulated as follows. Binds cyclosporin A (CsA). CsA mediates some of its effects via an inhibitory action on PPIase. PPIases accelerate the folding of proteins. It catalyzes the cis-trans isomerization of proline imidic peptide bonds in oligopeptides. In Schistosoma mansoni (Blood fluke), this protein is Peptidyl-prolyl cis-trans isomerase E.